Consider the following 551-residue polypeptide: Methionine--tRNA ligase (551 aa).

The 'HIGH' region motif lies at proline 12–histidine 22. Cysteine 144, cysteine 147, cysteine 157, and cysteine 160 together coordinate Zn(2+). A 'KMSKS' region motif is present at residues glutamine 330–serine 334. Lysine 333 contributes to the ATP binding site.

The protein belongs to the class-I aminoacyl-tRNA synthetase family. MetG type 1 subfamily. Monomer. Zn(2+) serves as cofactor.

It localises to the cytoplasm. It catalyses the reaction tRNA(Met) + L-methionine + ATP = L-methionyl-tRNA(Met) + AMP + diphosphate. Its function is as follows. Is required not only for elongation of protein synthesis but also for the initiation of all mRNA translation through initiator tRNA(fMet) aminoacylation. The chain is Methionine--tRNA ligase from Chlamydia abortus (strain DSM 27085 / S26/3) (Chlamydophila abortus).